A 382-amino-acid chain; its full sequence is uncharacterized protein (382 aa).

11 helical membrane passes run Val8–Leu28, Met45–Ile65, Tyr75–Trp95, Phe102–Ser122, Leu131–Ser151, Leu157–Phe177, Leu204–Pro224, Gly231–Gly251, Val274–Ile294, Ala325–Met345, and Ser349–Leu369.

This sequence belongs to the major facilitator superfamily. YcaD (TC 2.A.1.26) family.

It is found in the cell inner membrane. This is an uncharacterized protein from Salmonella gallinarum (strain 287/91 / NCTC 13346).